We begin with the raw amino-acid sequence, 647 residues long: 1-deoxy-D-xylulose-5-phosphate synthase (647 aa).

Thiamine diphosphate-binding positions include His72 and 113–115 (GHA). Mg(2+) is bound at residue Asp144. Thiamine diphosphate-binding positions include 145-146 (GA), Asn174, Tyr287, and Glu370. Asn174 is a Mg(2+) binding site.

Belongs to the transketolase family. DXPS subfamily. Homodimer. Mg(2+) serves as cofactor. It depends on thiamine diphosphate as a cofactor.

The catalysed reaction is D-glyceraldehyde 3-phosphate + pyruvate + H(+) = 1-deoxy-D-xylulose 5-phosphate + CO2. It participates in metabolic intermediate biosynthesis; 1-deoxy-D-xylulose 5-phosphate biosynthesis; 1-deoxy-D-xylulose 5-phosphate from D-glyceraldehyde 3-phosphate and pyruvate: step 1/1. Functionally, catalyzes the acyloin condensation reaction between C atoms 2 and 3 of pyruvate and glyceraldehyde 3-phosphate to yield 1-deoxy-D-xylulose-5-phosphate (DXP). The sequence is that of 1-deoxy-D-xylulose-5-phosphate synthase from Synechococcus sp. (strain WH7803).